The sequence spans 347 residues: DNA damage tolerance protein RHC31 (347 aa).

The residue at position 9 (S9) is a Phosphoserine. A Glycyl lysine isopeptide (Lys-Gly) (interchain with G-Cter in SUMO) cross-link involves residue K35.

Functionally, could be involved in a ubiquitin-related process important for DNA damage tolerance. The sequence is that of DNA damage tolerance protein RHC31 (AOS1) from Saccharomyces cerevisiae (strain ATCC 204508 / S288c) (Baker's yeast).